The primary structure comprises 211 residues: Small ribosomal subunit protein uS3 (211 aa).

In terms of domain architecture, KH type-2 spans 38-106; the sequence is LRKFIKKAFY…NIELNIIEVK (69 aa).

This sequence belongs to the universal ribosomal protein uS3 family. Part of the 30S ribosomal subunit. Forms a tight complex with proteins S10 and S14.

Its function is as follows. Binds the lower part of the 30S subunit head. Binds mRNA in the 70S ribosome, positioning it for translation. This chain is Small ribosomal subunit protein uS3, found in Ehrlichia ruminantium (strain Welgevonden).